Consider the following 351-residue polypeptide: Phosphatidylinositol transfer protein PDR16 (351 aa).

Residues 135 to 295 form the CRAL-TRIO domain; that stretch reads LVAVENESGK…LYGGDLKFKY (161 aa).

As to quaternary structure, homodimer. Apo-SFH3 forms a dimer through the hydrophobic interaction of gating helices. Binding of phosphatidylinositol leads to dissociation of the dimer into monomers in a reversible manner.

The protein localises to the lipid droplet. Its subcellular location is the microsome membrane. It localises to the endoplasmic reticulum membrane. The catalysed reaction is a 1,2-diacyl-sn-glycero-3-phospho-(1D-myo-inositol)(in) = a 1,2-diacyl-sn-glycero-3-phospho-(1D-myo-inositol)(out). Its function is as follows. Has phosphatidylinositol transfer activity. Involved in the regulation of the phospholipid composition of plasma- and endomembranes. Altering plasma membrane composition may provide a possible mechanism for multidrug resistance. Involved in the regulation of sterol biosynthesis. Contributes to efficient phospholipase D1 activation in the regulation of phospholipid turnover. Regulates the release of fatty acids from lipid droplets. This chain is Phosphatidylinositol transfer protein PDR16 (PDR16), found in Saccharomyces cerevisiae (strain ATCC 204508 / S288c) (Baker's yeast).